A 153-amino-acid polypeptide reads, in one-letter code: Xanthine-guanine phosphoribosyltransferase (153 aa).

5-phospho-alpha-D-ribose 1-diphosphate contacts are provided by residues Arg37 to Gly38 and Asp89 to Thr97. Asp90 lines the Mg(2+) pocket. Residues Asp93 and Ile136 each contribute to the guanine site. Xanthine is bound by residues Asp93 and Ile136. GMP-binding positions include Asp93 to Thr97 and Trp135 to Ile136.

The protein belongs to the purine/pyrimidine phosphoribosyltransferase family. XGPT subfamily. Homotetramer. It depends on Mg(2+) as a cofactor.

It is found in the cell inner membrane. The catalysed reaction is GMP + diphosphate = guanine + 5-phospho-alpha-D-ribose 1-diphosphate. The enzyme catalyses XMP + diphosphate = xanthine + 5-phospho-alpha-D-ribose 1-diphosphate. It carries out the reaction IMP + diphosphate = hypoxanthine + 5-phospho-alpha-D-ribose 1-diphosphate. It participates in purine metabolism; GMP biosynthesis via salvage pathway; GMP from guanine: step 1/1. It functions in the pathway purine metabolism; XMP biosynthesis via salvage pathway; XMP from xanthine: step 1/1. Its function is as follows. Purine salvage pathway enzyme that catalyzes the transfer of the ribosyl-5-phosphate group from 5-phospho-alpha-D-ribose 1-diphosphate (PRPP) to the N9 position of the 6-oxopurines guanine and xanthine to form the corresponding ribonucleotides GMP (guanosine 5'-monophosphate) and XMP (xanthosine 5'-monophosphate), with the release of PPi. To a lesser extent, also acts on hypoxanthine. This Pasteurella multocida (strain Pm70) protein is Xanthine-guanine phosphoribosyltransferase.